The chain runs to 128 residues: Virion-associated protein (128 aa).

Coiled-coil stretches lie at residues 1-30 (MNLA…ILAK) and 37-58 (ESSN…EMKE). The tract at residues 98 to 128 (FDVGNEGMGSSTNPNALKWPPTEKPQPWPPR) is disordered. Pro residues predominate over residues 119 to 128 (TEKPQPWPPR). The segment at 122 to 128 (PQPWPPR) is capsid binding.

Belongs to the caulimovirus ORF III family. In terms of assembly, homotetramer, through coiled-coil domain. Homotrimer when interacts with icosehadral capsid. Interacts with capsid protein, and with Movement protein.

Its subcellular location is the virion. It is found in the host cell junction. It localises to the host plasmodesma. Its function is as follows. Plays a role in virus cell-to-cell and plant-to-plant transmission. Interacts with virion icosahedral capsid and movement protein, thereby facilitating virion cell-to-cell transmission through plasmodesmata opened by viral movement protein. Also interacts with aphid transmission factor, attaching the virion to aphid stylet when the animal feeds on an virus infected plant. Aphid saliva may later detach the virion, inducing release of infectious particles when the animal feeds on a new plant. In Carnation etched ring virus (CERV), this protein is Virion-associated protein.